A 452-amino-acid chain; its full sequence is Probable 1,4-beta-D-glucan cellobiohydrolase A (452 aa).

The N-terminal stretch at 1-17 (MHQRALLFSALAVAANA) is a signal peptide. Asn81 carries N-linked (GlcNAc...) asparagine glycosylation. Glu226 acts as the Nucleophile in catalysis. The Proton donor role is filled by Glu231. Asn284 carries an N-linked (GlcNAc...) asparagine glycan. Residues 405–431 (ADPSKPGVARGTCEHGAGDPENVESQH) are disordered.

Belongs to the glycosyl hydrolase 7 (cellulase C) family.

The protein resides in the secreted. It catalyses the reaction Hydrolysis of (1-&gt;4)-beta-D-glucosidic linkages in cellulose and cellotetraose, releasing cellobiose from the non-reducing ends of the chains.. In terms of biological role, the biological conversion of cellulose to glucose generally requires three types of hydrolytic enzymes: (1) Endoglucanases which cut internal beta-1,4-glucosidic bonds; (2) Exocellobiohydrolases that cut the disaccharide cellobiose from the non-reducing end of the cellulose polymer chain; (3) Beta-1,4-glucosidases which hydrolyze the cellobiose and other short cello-oligosaccharides to glucose. The sequence is that of Probable 1,4-beta-D-glucan cellobiohydrolase A (cbhA) from Aspergillus fumigatus (strain CBS 144.89 / FGSC A1163 / CEA10) (Neosartorya fumigata).